A 660-amino-acid chain; its full sequence is DNA mismatch repair protein MutL (660 aa).

The protein belongs to the DNA mismatch repair MutL/HexB family.

Functionally, this protein is involved in the repair of mismatches in DNA. It is required for dam-dependent methyl-directed DNA mismatch repair. May act as a 'molecular matchmaker', a protein that promotes the formation of a stable complex between two or more DNA-binding proteins in an ATP-dependent manner without itself being part of a final effector complex. This chain is DNA mismatch repair protein MutL, found in Solibacter usitatus (strain Ellin6076).